Reading from the N-terminus, the 267-residue chain is Mannose-specific lectin 1 (267 aa).

The first 24 residues, 1–24 (MAKSLVLSSLLLALLLAAPLASLA), serve as a signal peptide directing secretion. Bulb-type lectin domains follow at residues 26–136 (NNVL…APNR) and 150–260 (RNVL…SPAR). Intrachain disulfides connect Cys-54/Cys-76 and Cys-178/Cys-203.

As to quaternary structure, heterotetramer of 2 domain 1 and 2 domain 2 chains arranged as a dimer of domain 1/domain 2 heterodimers.

In terms of biological role, mannose-specific lectin. Has weak agglutinating activity towards trypsin-treated erythrocytes from rabbit but not from human. This is Mannose-specific lectin 1 from Crocus vernus (Dutch crocus).